The sequence spans 108 residues: Thiosulfate sulfurtransferase GlpE (108 aa).

The Rhodanese domain maps to 17–105 (QEKEAVLVDI…WQRQFPAEVA (89 aa)). Cys65 serves as the catalytic Cysteine persulfide intermediate.

Belongs to the GlpE family.

The protein resides in the cytoplasm. It catalyses the reaction thiosulfate + hydrogen cyanide = thiocyanate + sulfite + 2 H(+). It carries out the reaction thiosulfate + [thioredoxin]-dithiol = [thioredoxin]-disulfide + hydrogen sulfide + sulfite + 2 H(+). Functionally, transferase that catalyzes the transfer of sulfur from thiosulfate to thiophilic acceptors such as cyanide or dithiols. May function in a CysM-independent thiosulfate assimilation pathway by catalyzing the conversion of thiosulfate to sulfite, which can then be used for L-cysteine biosynthesis. This chain is Thiosulfate sulfurtransferase GlpE, found in Escherichia coli O45:K1 (strain S88 / ExPEC).